The chain runs to 349 residues: Rhodopsin (349 aa).

Residues 1-33 are Extracellular-facing; the sequence is TEGPYFYIPMSNATGVVRSPYEYPQYYLVYPAA. N-linked (GlcNAc...) asparagine glycosylation is present at asparagine 12. A helical transmembrane segment spans residues 34–58; it reads FAVLGAYMFFLIIFGFPVNFLTLYV. Over 59-70 the chain is Cytoplasmic; sequence TIEHKKLRTPLN. A helical membrane pass occupies residues 71–93; the sequence is YILLNLAVADLFMVIGGFTTTIY. Residues 94–107 lie on the Extracellular side of the membrane; the sequence is TSMHGYFVLGRLGC. Cysteines 107 and 184 form a disulfide. A helical membrane pass occupies residues 108-130; sequence NLEGFSATLGGMISLWSLVVLAV. The 'Ionic lock' involved in activated form stabilization signature appears at 131–133; it reads ERW. Residues 131–149 lie on the Cytoplasmic side of the membrane; sequence ERWVVVCKPMSNFRFGENH. The chain crosses the membrane as a helical span at residues 150–170; it reads AIMGVTLTWAMGLACTVPPLV. Residues 171 to 199 are Extracellular-facing; that stretch reads GWSRYIPEGMQCSCGIDYYTRAEGFNNES. Asparagine 197 is a glycosylation site (N-linked (GlcNAc...) asparagine). A helical transmembrane segment spans residues 200–221; sequence FVLYMFVCHFSFPLVVIFFCYG. Over 222-249 the chain is Cytoplasmic; the sequence is RLLCAVKEAAAAQQESETTQRAEREVTR. Residues 250 to 271 traverse the membrane as a helical segment; that stretch reads MVILMVIGFLVCWLPYASVAWY. The Extracellular segment spans residues 272–283; it reads IFTHQGSEFGPL. Residues 284–305 traverse the membrane as a helical segment; sequence FMTIPAFFAKSSAIYNPVIYIC. Residue lysine 293 is modified to N6-(retinylidene)lysine. The Cytoplasmic portion of the chain corresponds to 306–349; that stretch reads LNKQFRQCMLTTLFCGKNPFEEEEGASSTKTEASSASSSSVSPA. Cysteine 320 is lipidated: S-palmitoyl cysteine. A disordered region spans residues 326–349; it reads EEEEGASSTKTEASSASSSSVSPA. Over residues 331-349 the composition is skewed to low complexity; it reads ASSTKTEASSASSSSVSPA.

The protein belongs to the G-protein coupled receptor 1 family. Opsin subfamily. Phosphorylated on some or all of the serine and threonine residues present in the C-terminal region. Post-translationally, contains one covalently linked retinal chromophore.

Its subcellular location is the membrane. It localises to the cell projection. The protein localises to the cilium. It is found in the photoreceptor outer segment. Photoreceptor required for image-forming vision at low light intensity. While most salt water fish species use retinal as chromophore, most freshwater fish use 3-dehydroretinal, or a mixture of retinal and 3-dehydroretinal. Light-induced isomerization of 11-cis to all-trans retinal triggers a conformational change that activates signaling via G-proteins. Subsequent receptor phosphorylation mediates displacement of the bound G-protein alpha subunit by arrestin and terminates signaling. The chain is Rhodopsin (rho) from Myripristis berndti (Bigscale soldierfish).